We begin with the raw amino-acid sequence, 548 residues long: MMATLATSPPTSPTWPKRRPRAWALRCERYCCAAATYFPLAFVYSLTTWAVYVEASIGLKPSRSPWIGLPTSILGVLLYICLNASYTVAVFTDPGSPLTTGAGRHQYSALPVSELPEYTAYTVSSTGGSRYCKKCQCPKPDRAHHCSTCKRCVLKMDHHCPWLATCVGLYNYKAFLLFLIYTSLFCWVDFAVSATWIWTEVFNDAPYLETMLPVNVVLLAILGGIIGLVLTGFTAWHISLAVRGMTTIECLEKTRYVSPLRKALDRHRYEHILGNHRDGNRASPVADSFGHRLQDYGQQILDAHANAIPGVTRAEEGEERLSPAPEQPASHGVSDDQLTPAQQALTRSYAELERQREHDRYQDYLNEEDNGKLPHAFDLGWRRNLLHLFGNRPLLWLIPVCTTTGDGWRWEPSRKFLEAQEGLRLKREQDMANQQHYYRDLYSRNMNNGRAWLGPNAAAPTWNPHQPLDSFRDPERPATGVSMRTLAPMSPRPRPGDSDFEDDISETDPLNQQSVPANGAVNQLQKANEASSATTNRREDSSEWRDWD.

At 1 to 32 the chain is on the cytoplasmic side; it reads MMATLATSPPTSPTWPKRRPRAWALRCERYCC. The chain crosses the membrane as a helical span at residues 33–53; sequence AAATYFPLAFVYSLTTWAVYV. At 54–70 the chain is on the extracellular side; sequence EASIGLKPSRSPWIGLP. Residues 71 to 91 form a helical membrane-spanning segment; it reads TSILGVLLYICLNASYTVAVF. Over 92-173 the chain is Cytoplasmic; it reads TDPGSPLTTG…ATCVGLYNYK (82 aa). In terms of domain architecture, DHHC spans 130–180; sequence RYCKKCQCPKPDRAHHCSTCKRCVLKMDHHCPWLATCVGLYNYKAFLLFLI. A helical transmembrane segment spans residues 174 to 194; the sequence is AFLLFLIYTSLFCWVDFAVSA. The Extracellular segment spans residues 195–215; the sequence is TWIWTEVFNDAPYLETMLPVN. A helical membrane pass occupies residues 216-236; that stretch reads VVLLAILGGIIGLVLTGFTAW. Over 237–548 the chain is Cytoplasmic; that stretch reads HISLAVRGMT…EDSSEWRDWD (312 aa). Disordered stretches follow at residues 313-339 and 463-548; these read RAEE…DQLT and NPHQ…RDWD. The segment covering 508–535 has biased composition (polar residues); sequence DPLNQQSVPANGAVNQLQKANEASSATT. Residues 536–548 are compositionally biased toward basic and acidic residues; sequence NRREDSSEWRDWD.

Belongs to the DHHC palmitoyltransferase family. PFA3 subfamily. Autopalmitoylated.

The protein resides in the vacuole membrane. The enzyme catalyses L-cysteinyl-[protein] + hexadecanoyl-CoA = S-hexadecanoyl-L-cysteinyl-[protein] + CoA. In terms of biological role, palmitoyltransferase specific for VAC8. Palmitoylates VAC8 at one or more of its N-terminal cysteine residues, which is required for its proper membrane localization. This Aspergillus fumigatus (strain ATCC MYA-4609 / CBS 101355 / FGSC A1100 / Af293) (Neosartorya fumigata) protein is Palmitoyltransferase pfa3 (pfa3).